Here is a 265-residue protein sequence, read N- to C-terminus: uncharacterized protein (265 aa).

This sequence belongs to the MG067/MG068/MG395 family.

This is an uncharacterized protein from Mycoplasma pneumoniae (strain ATCC 29342 / M129 / Subtype 1) (Mycoplasmoides pneumoniae).